The following is a 539-amino-acid chain: Membrane protein insertase YidC (539 aa).

Helical transmembrane passes span 6–26 (TLLV…WQVA), 341–361 (SVIQ…TFIV), 416–436 (LGGC…YWAL), 454–474 (LSAQ…MFLI), and 495–515 (PVMF…YWLV).

The protein belongs to the OXA1/ALB3/YidC family. Type 1 subfamily. As to quaternary structure, interacts with the Sec translocase complex via SecD. Specifically interacts with transmembrane segments of nascent integral membrane proteins during membrane integration.

The protein resides in the cell inner membrane. Functionally, required for the insertion and/or proper folding and/or complex formation of integral membrane proteins into the membrane. Involved in integration of membrane proteins that insert both dependently and independently of the Sec translocase complex, as well as at least some lipoproteins. Aids folding of multispanning membrane proteins. The chain is Membrane protein insertase YidC from Vibrio vulnificus (strain YJ016).